A 112-amino-acid polypeptide reads, in one-letter code: uncharacterized protein (112 aa).

This is an uncharacterized protein from Methanocaldococcus jannaschii (strain ATCC 43067 / DSM 2661 / JAL-1 / JCM 10045 / NBRC 100440) (Methanococcus jannaschii).